A 1183-amino-acid polypeptide reads, in one-letter code: Atrophin-1 (1183 aa).

Disordered stretches follow at residues 1 to 603 (MKTR…ITTS), 617 to 760 (SPAG…ARFN), and 780 to 855 (LEGS…HRPP). Positions 16–32 (RKKEAPGPREELRSRGR) match the Nuclear localization signal motif. Residues 17-29 (KKEAPGPREELRS) are compositionally biased toward basic and acidic residues. S34 bears the Phosphoserine mark. Residues 45 to 63 (GKAEKSRQTAKKARVEETS) show a composition bias toward basic and acidic residues. Phosphoserine occurs at positions 77, 79, 100, 102, and 106. Residues 107 to 127 (LDGRSINDDGSSDPRDIDQDN) show a composition bias toward basic and acidic residues. The span at 128–151 (RSTSPSIYSPGSVENDSDSSSGLS) shows a compositional bias: polar residues. Pro residues-rich tracts occupy residues 157–173 (PYHP…PPDS) and 207–218 (GPPPGAPPPHPQ). The segment covering 261 to 272 (IPISSSGASGAP) has biased composition (low complexity). The segment covering 344-373 (PPGPEKGPTLAPSPHPLPPASSSAPGPPMR) has biased composition (pro residues). Residues 377–400 (SSCSSSSVAASSSSSAATSQYPAS) are compositionally biased toward low complexity. Polar residues predominate over residues 415-436 (SMSVSNQPPKYTQPSLPSQAVW). The involved in binding BAIAP2 stretch occupies residues 510–560 (HPLESSNSHHAHPYNMSPSLGSLRPYPPGPAHLPPSHGQVSYSQAGPNGPP). A compositionally biased stretch (low complexity) spans 562 to 584 (SSSSNSSGSSSQAAYSCSHPSSS). A Phosphoserine modification is found at S625. The residue at position 634 (K634) is an N6-acetyllysine. At T646 the chain carries Phosphothreonine. The residue at position 654 (S654) is a Phosphoserine. At T662 the chain carries Phosphothreonine. Pro residues-rich tracts occupy residues 701 to 711 (LPPPPAAPTTG) and 732 to 745 (SPVP…PPPK). S732 carries the post-translational modification Phosphoserine; by MAPK8. Phosphoserine is present on residues S739 and S741. The span at 788–832 (KRADLVEKVRREAEQRAREEKEREREREREKEREREKERELERSV) shows a compositional bias: basic and acidic residues. The tract at residues 872–887 (DTPALRTLSEYARPHV) is required for interaction with FAT1. Residue S889 is modified to Phosphoserine. Positions 921-940 (PAAREREREARERDLRDRLK) are disordered. The span at 922 to 940 (AAREREREARERDLRDRLK) shows a compositional bias: basic and acidic residues. Positions 1026-1034 (ALGNDPLAR) match the Nuclear export signal motif. The residue at position 1108 (R1108) is an Asymmetric dimethylarginine. K1176 participates in a covalent cross-link: Glycyl lysine isopeptide (Lys-Gly) (interchain with G-Cter in SUMO2).

Interacts with NR2E1; the interaction represses the transcriptional activity of NR2E1. Interact (via its N-terminus) with FAT1 (via a C-terminal domain). Interacts with BAIAP2, WWP1, WWP2, WWP3 and RERE. Interacts (via its N-terminus) with MTG8; the interaction enhances transcriptional repression of MTG8. Interacts with PQBP1. Post-translationally, phosphorylated in vitro by MAPK8/JNK1 on Ser-732. In terms of tissue distribution, predominant neuronal expression, Expressed in most brain regions including striatum, hippocampus, cerebral cortex, diencephalon, brain stem and cerebellum. Highest levels in cerebellum. Also highly expressed in kidney and testis, low expression in skeletal muscle and heart.

It is found in the nucleus. The protein resides in the cytoplasm. Its subcellular location is the perinuclear region. It localises to the cell junction. Functionally, transcriptional corepressor. Recruits NR2E1 to repress transcription. Promotes vascular smooth cell (VSMC) migration and orientation. Corepressor of MTG8 transcriptional repression. Has some intrinsic repression activity. This Rattus norvegicus (Rat) protein is Atrophin-1 (Atn1).